A 398-amino-acid chain; its full sequence is Diaminopropionate ammonia-lyase (398 aa).

The residue at position 77 (Lys77) is an N6-(pyridoxal phosphate)lysine.

This sequence belongs to the diaminopropionate ammonia-lyase family. As to quaternary structure, homodimer. Pyridoxal 5'-phosphate serves as cofactor.

The enzyme catalyses (S)-2,3-diaminopropanoate + H2O + H(+) = pyruvate + 2 NH4(+). It carries out the reaction (R)-2,3-diaminopropanoate + H2O + H(+) = pyruvate + 2 NH4(+). Functionally, catalyzes the alpha,beta-elimination reaction of both L- and D-alpha,beta-diaminopropionate (DAP) to form pyruvate and ammonia. The D-isomer of serine is degraded to pyruvate, though very poorly; other amino acids (L-serine, D- and L-threonine, D- and L-beta-Cl-alanine) are not substrates. The chain is Diaminopropionate ammonia-lyase (ygeX) from Escherichia coli O157:H7.